A 635-amino-acid polypeptide reads, in one-letter code: Chaperone protein DnaK (635 aa).

Phosphothreonine; by autocatalysis is present on Thr198. Low complexity predominate over residues 601 to 616 (AQQQAQAQGANAGQSS). A disordered region spans residues 601 to 635 (AQQQAQAQGANAGQSSAKEDDVVDAEFEEVNDDKK). Residues 621–635 (DVVDAEFEEVNDDKK) show a composition bias toward acidic residues.

Belongs to the heat shock protein 70 family.

Its function is as follows. Acts as a chaperone. This chain is Chaperone protein DnaK, found in Vibrio cholerae serotype O1 (strain ATCC 39541 / Classical Ogawa 395 / O395).